Consider the following 283-residue polypeptide: Pantothenate synthetase (283 aa).

30-37 (MGYLHEGH) lines the ATP pocket. Residue His-37 is the Proton donor of the active site. Gln-61 lines the (R)-pantoate pocket. A beta-alanine-binding site is contributed by Gln-61. 147–150 (GQKD) provides a ligand contact to ATP. Gln-153 contacts (R)-pantoate. Residues Val-176 and 184–187 (MSSR) contribute to the ATP site.

It belongs to the pantothenate synthetase family. Homodimer.

It is found in the cytoplasm. The catalysed reaction is (R)-pantoate + beta-alanine + ATP = (R)-pantothenate + AMP + diphosphate + H(+). The protein operates within cofactor biosynthesis; (R)-pantothenate biosynthesis; (R)-pantothenate from (R)-pantoate and beta-alanine: step 1/1. In terms of biological role, catalyzes the condensation of pantoate with beta-alanine in an ATP-dependent reaction via a pantoyl-adenylate intermediate. This is Pantothenate synthetase from Thermoanaerobacter sp. (strain X514).